The primary structure comprises 325 residues: Hydroxymethylglutaryl-CoA lyase, mitochondrial (325 aa).

The transit peptide at 1–27 (MASVRKAFPRRLVGLTSLRAVSTSSMG) directs the protein to the mitochondrion. The Pyruvate carboxyltransferase domain occupies 33–300 (VKIVEVGPRD…HTGVNLQKLL (268 aa)). Substrate is bound at residue Arg-41. An a divalent metal cation-binding site is contributed by Asp-42. An N6-acetyllysine; alternate modification is found at Lys-48. Residue Lys-48 is modified to N6-succinyllysine; alternate. Lys-111 bears the N6-acetyllysine mark. N6-acetyllysine; alternate is present on residues Lys-137 and Lys-179. An N6-succinyllysine; alternate mark is found at Lys-137 and Lys-179. His-233 and His-235 together coordinate a divalent metal cation. The active site involves Cys-266. An a divalent metal cation-binding site is contributed by Asn-275. The short motif at 323–325 (CKL) is the Microbody targeting signal element. Lys-324 is subject to N6-acetyllysine.

The protein belongs to the HMG-CoA lyase family. Homodimer; disulfide-linked. Can also form homotetramers.

It localises to the mitochondrion matrix. Its subcellular location is the peroxisome. It catalyses the reaction (3S)-3-hydroxy-3-methylglutaryl-CoA = acetoacetate + acetyl-CoA. It functions in the pathway metabolic intermediate metabolism; (S)-3-hydroxy-3-methylglutaryl-CoA degradation; acetoacetate from (S)-3-hydroxy-3-methylglutaryl-CoA: step 1/1. Its function is as follows. Mitochondrial 3-hydroxy-3-methylglutaryl-CoA lyase that catalyzes a cation-dependent cleavage of (S)-3-hydroxy-3-methylglutaryl-CoA into acetyl-CoA and acetoacetate, a key step in ketogenesis. Terminal step in leucine catabolism. Ketone bodies (beta-hydroxybutyrate, acetoacetate and acetone) are essential as an alternative source of energy to glucose, as lipid precursors and as regulators of metabolism. The protein is Hydroxymethylglutaryl-CoA lyase, mitochondrial (Hmgcl) of Mus musculus (Mouse).